The primary structure comprises 225 residues: Esterase OVCA2 (225 aa).

Catalysis depends on charge relay system residues serine 119, aspartate 177, and histidine 204.

Belongs to the LovG family. Strongly expressed in kidney and liver. Moderately expressed in brain, skin and testis. Weakly expressed in heart, lung, small intestine, spleen, stomach and thymus.

It carries out the reaction a carboxylic ester + H2O = an alcohol + a carboxylate + H(+). Exhibits ester hydrolase activity with a strong preference for long-chain alkyl ester substrates and high selectivity against a variety of short, branched, and substituted esters. Is able to hydrolyze ester bonds within a wide range of p-nitrophenyl derivatives (C2-C14) in vitro, with a strong preference toward substrates of &gt;8 carbons. This Mus musculus (Mouse) protein is Esterase OVCA2 (Ovca2).